The chain runs to 598 residues: UvrABC system protein C (598 aa).

Residues 14–91 (DSPGCYLHKD…IQKNMPKYNI (78 aa)) enclose the GIY-YIG domain. A UVR domain is found at 196 to 231 (DKIIEDLRSKMLAASEEMAFERAAEYRDLISGIATM).

It belongs to the UvrC family. In terms of assembly, interacts with UvrB in an incision complex.

The protein localises to the cytoplasm. Its function is as follows. The UvrABC repair system catalyzes the recognition and processing of DNA lesions. UvrC both incises the 5' and 3' sides of the lesion. The N-terminal half is responsible for the 3' incision and the C-terminal half is responsible for the 5' incision. The chain is UvrABC system protein C from Streptococcus pyogenes serotype M28 (strain MGAS6180).